Here is a 235-residue protein sequence, read N- to C-terminus: Glial cell line-derived neurotrophic factor (235 aa).

Positions 1 to 19 (MKLWDILATCLLLLSSVST) are cleaved as a signal peptide. Residues 20 to 87 (RPLFHKLQPS…DFIEATLGRL (68 aa)) constitute a propeptide that is removed on maturation. 2 disordered regions span residues 34-60 (VRSESPALDPIIDSQPETSNPKQASME) and 91-137 (SDVE…RVKG). Over residues 119–128 (GERKRSRGRA) the composition is skewed to basic residues. 3 disulfides stabilise this stretch: Cys142–Cys203, Cys169–Cys232, and Cys173–Cys234. Residues Asn150 and Asn186 are each glycosylated (N-linked (GlcNAc...) asparagine).

This sequence belongs to the TGF-beta family. GDNF subfamily. In terms of assembly, homodimer; disulfide-linked. Interacts with GFRA1 coreceptor and RET: forms a 2:2:2 ternary complex composed of GDNF ligand, GFRA1 and RET receptor. As to expression, first expressed at 14 hours post-fertilization (hpf) in the ventral half of anterior somites and in intermediate mesoderm. Ventral somitic expression persists and extends more posteriorly over the next 12 hours. Expressed throughout the ventral trunk mesoderm and endoderm at 24 hpf. By 30 hpf, somitic expression ceases and by 36 hpf, expression becomes restricted to the endodermal cells forming the gut, with expression along the whole length of the developing gut tube at 72 hpf.

The protein localises to the secreted. Its function is as follows. Neurotrophic factor that enhances survival and morphological differentiation of dopaminergic neurons and increases their high-affinity dopamine uptake. Acts by binding to its coreceptor, GFRA1, leading to autophosphorylation and activation of the RET receptor. This chain is Glial cell line-derived neurotrophic factor, found in Danio rerio (Zebrafish).